The following is a 355-amino-acid chain: MSTFKPLVFSGVQPTGNLHLGNYLGAIKRWVEVQKTEECIYCVVDMHALTVSPDPVELMQSTREVTAAFLAAGIDPKKSIVFNQSRVMQHAELAWVFNCVARIGWMSRMTQFKDKAGKDRENASLGLFAYPSLMAADILLYRATAVPVGEDQKQHLELTRDIAQKFNNDYSDRIASLGVGVDMKVGDEQVSGFFPLTEPMISGPAMRIMSLRDGTKKMSKSDPSDLSRINLIDDEDTITKKIRKAKTDSDGLPSEVDGLEGRPEADNLVGIYAALSSTTKEDVLKEFGGRQFSDLKASLADLAVARLSPITHEMRRLVADPAHIDSVLRDGGEQAGAIAEQTMRHVRDIVGWLQN.

ATP is bound by residues 13-15 and 21-22; these read QPT and GN. The 'HIGH' region signature appears at 14-22; sequence PTGNLHLGN. Aspartate 137 is an L-tryptophan binding site. Residues 149 to 151, isoleucine 208, and 217 to 221 contribute to the ATP site; these read GED and KMSKS. The 'KMSKS' region motif lies at 217-221; the sequence is KMSKS.

Belongs to the class-I aminoacyl-tRNA synthetase family. As to quaternary structure, homodimer.

Its subcellular location is the cytoplasm. The catalysed reaction is tRNA(Trp) + L-tryptophan + ATP = L-tryptophyl-tRNA(Trp) + AMP + diphosphate + H(+). Its function is as follows. Catalyzes the attachment of tryptophan to tRNA(Trp). This is Tryptophan--tRNA ligase from Brucella melitensis biotype 1 (strain ATCC 23456 / CCUG 17765 / NCTC 10094 / 16M).